Consider the following 296-residue polypeptide: 4-hydroxybenzoate octaprenyltransferase (296 aa).

The next 9 helical transmembrane spans lie at 29-49 (IGIY…AEGV), 55-75 (LFIF…INDY), 102-122 (ALVL…FTNA), 124-141 (TIWL…YPFM), 146-166 (FYPQ…AFTA), 169-189 (GSLP…TVAY), 216-236 (ADRL…LLAG), 239-259 (FELG…FVWE), and 271-291 (CFNA…GIVL).

This sequence belongs to the UbiA prenyltransferase family. It depends on Mg(2+) as a cofactor.

The protein localises to the cell inner membrane. It carries out the reaction all-trans-octaprenyl diphosphate + 4-hydroxybenzoate = 4-hydroxy-3-(all-trans-octaprenyl)benzoate + diphosphate. It participates in cofactor biosynthesis; ubiquinone biosynthesis. Catalyzes the prenylation of para-hydroxybenzoate (PHB) with an all-trans polyprenyl group. Mediates the second step in the final reaction sequence of ubiquinone-8 (UQ-8) biosynthesis, which is the condensation of the polyisoprenoid side chain with PHB, generating the first membrane-bound Q intermediate 3-octaprenyl-4-hydroxybenzoate. This Ectopseudomonas mendocina (strain ymp) (Pseudomonas mendocina) protein is 4-hydroxybenzoate octaprenyltransferase.